The chain runs to 97 residues: Large ribosomal subunit protein bL31 (97 aa).

Positions 76–97 (KTPKKAKGKTEEYTKHRSLNEL) are disordered. A compositionally biased stretch (basic and acidic residues) spans 83 to 97 (GKTEEYTKHRSLNEL).

This sequence belongs to the bacterial ribosomal protein bL31 family. Type A subfamily. Part of the 50S ribosomal subunit.

In terms of biological role, binds the 23S rRNA. This is Large ribosomal subunit protein bL31 from Mycoplasma pneumoniae (strain ATCC 29342 / M129 / Subtype 1) (Mycoplasmoides pneumoniae).